A 369-amino-acid chain; its full sequence is Histidinol-phosphate aminotransferase 2 (369 aa).

Lysine 231 carries the post-translational modification N6-(pyridoxal phosphate)lysine.

It belongs to the class-II pyridoxal-phosphate-dependent aminotransferase family. Histidinol-phosphate aminotransferase subfamily. Homodimer. Pyridoxal 5'-phosphate serves as cofactor.

The enzyme catalyses L-histidinol phosphate + 2-oxoglutarate = 3-(imidazol-4-yl)-2-oxopropyl phosphate + L-glutamate. It functions in the pathway amino-acid biosynthesis; L-histidine biosynthesis; L-histidine from 5-phospho-alpha-D-ribose 1-diphosphate: step 7/9. The polypeptide is Histidinol-phosphate aminotransferase 2 (Legionella pneumophila (strain Lens)).